Here is a 190-residue protein sequence, read N- to C-terminus: Threonylcarbamoyl-AMP synthase (190 aa).

One can recognise a YrdC-like domain in the interval 7-190 (GDAIAAAIDV…ALTGELFRQG (184 aa)).

This sequence belongs to the SUA5 family. TsaC subfamily.

It is found in the cytoplasm. It carries out the reaction L-threonine + hydrogencarbonate + ATP = L-threonylcarbamoyladenylate + diphosphate + H2O. Its function is as follows. Required for the formation of a threonylcarbamoyl group on adenosine at position 37 (t(6)A37) in tRNAs that read codons beginning with adenine. Catalyzes the conversion of L-threonine, HCO(3)(-)/CO(2) and ATP to give threonylcarbamoyl-AMP (TC-AMP) as the acyladenylate intermediate, with the release of diphosphate. This is Threonylcarbamoyl-AMP synthase from Shigella boydii serotype 4 (strain Sb227).